Reading from the N-terminus, the 504-residue chain is Subtilisin-like protease 1 (504 aa).

An N-terminal signal peptide occupies residues 1–19 (MGVFRFISISLAAVSAANA). The propeptide occupies 20 to 116 (AQILSMPHAQ…VEPDTIVSVH (97 aa)). Positions 34 to 116 (SYIVMMKDDT…VEPDTIVSVH (83 aa)) constitute an Inhibitor I9 domain. The Peptidase S8 domain maps to 126–400 (SWGLARISNP…NVLINNGGAK (275 aa)). Active-site charge relay system residues include D158 and H190. The segment at 172-198 (AIWGSNQVNDGDDRDGSGHGTHTSGTM) is disordered. N-linked (GlcNAc...) asparagine glycans are attached at residues N233 and N251. Positions 282-294 (NDNQDAQSSSPAS) are enriched in polar residues. The tract at residues 282–312 (NDNQDAQSSSPASEPSVCTVGSSAEDDSRSS) is disordered. Residue S345 is the Charge relay system of the active site. Positions 378-394 (TSSITDAGPGTPTNVLI) are enriched in polar residues. Residues 378–483 (TSSITDAGPG…YPGGDNFDFD (106 aa)) are disordered. 2 stretches are compositionally biased toward pro residues: residues 405-449 (NPNP…PGQP) and 457-473 (APAPAPMPPTPQHPHTP).

Belongs to the peptidase S8 family.

The protein localises to the secreted. Secreted subtilisin-like serine protease with keratinolytic activity that contributes to pathogenicity. This is Subtilisin-like protease 1 (SUB1) from Trichophyton rubrum (Athlete's foot fungus).